The following is a 449-amino-acid chain: Chitobiosyldiphosphodolichol beta-mannosyltransferase (449 aa).

Residues 1–7 (MFLEIPR) lie on the Lumenal side of the membrane. Residues 8–28 (WLLALIILYLSIPLVVYYVIP) form a helical membrane-spanning segment. The Dolichol recognition motif lies at 21-32 (LVVYYVIPYLFY). The Cytoplasmic segment spans residues 29–104 (YLFYGNKSTK…SNLKRKGGGT (76 aa)). The helical intramembrane region spans 105-125 (SVIFMVKKVLFQVLSIFKLLW). Over 126–449 (ELRGSDYILV…RTMRDLKLIH (324 aa)) the chain is Cytoplasmic. The tract at residues 435–449 (QSNWERTMRDLKLIH) is required for oligomerization.

Belongs to the glycosyltransferase group 1 family. Glycosyltransferase 33 subfamily. Homodimer. ALG1 forms mannosyltransferases (MT) heteromeric complexes with either ALG2 or ALG11.

The protein resides in the endoplasmic reticulum membrane. The catalysed reaction is an N,N'-diacetylchitobiosyl-diphospho-di-trans,poly-cis-dolichol + GDP-alpha-D-mannose = a beta-D-Man-(1-&gt;4)-beta-D-GlcNAc-(1-&gt;4)-alpha-D-GlcNAc-diphospho-di-trans,poly-cis-dolichol + GDP + H(+). It participates in protein modification; protein glycosylation. In terms of biological role, participates in the formation of the lipid-linked precursor oligosaccharide for N-glycosylation. Involved in assembling the dolichol-pyrophosphate-GlcNAc(2)-Man(5) intermediate on the cytoplasmic surface of the ER. The protein is Chitobiosyldiphosphodolichol beta-mannosyltransferase (ALG1) of Saccharomyces cerevisiae (strain ATCC 204508 / S288c) (Baker's yeast).